Consider the following 284-residue polypeptide: Serine protease 57 (284 aa).

A signal peptide spans 1–35; sequence MPSSTAMVPGTRGGWHCLVLTTAAALTQLMWLPGC. The region spanning 40–269 is the Peptidase S1 domain; the sequence is IVGGHEVTPH…FVTWIWDVVR (230 aa). A disulfide bond links cysteine 65 and cysteine 81. Catalysis depends on charge relay system residues histidine 80 and aspartate 128. The N-linked (GlcNAc...) asparagine glycan is linked to asparagine 135. Cystine bridges form between cysteine 163-cysteine 230, cysteine 194-cysteine 208, and cysteine 220-cysteine 245. Serine 224 acts as the Charge relay system in catalysis.

It belongs to the peptidase S1 family. In terms of processing, after cleavage of the signal peptide, the N-terminus is probably further processed by CTSC. Processing by CTSC is probably required for accumulation in cytoplasmic granules; in the absence of CTSC the protein does not accumulate. Post-translationally, N-glycosylated.

The protein localises to the cytoplasmic granule lumen. It localises to the secreted. Its function is as follows. Serine protease that cleaves preferentially after Arg residues. Can also cleave after citrulline (deimidated arginine) and methylarginine residues. This chain is Serine protease 57 (Prss57), found in Mus musculus (Mouse).